The chain runs to 53 residues: Mannose/glucose-specific lectin alpha 2 chain (53 aa).

This sequence belongs to the leguminous lectin family. In terms of assembly, tetramer of two alpha and two beta chains.

This is Mannose/glucose-specific lectin alpha 2 chain from Lathyrus ochrus (Cyprus-vetch).